Here is a 280-residue protein sequence, read N- to C-terminus: Polyamine aminopropyltransferase (280 aa).

Positions 2-235 constitute a PABS domain; it reads GGWIDEEHRG…GWWSWTFAAV (234 aa). Position 29 (glutamine 29) interacts with S-methyl-5'-thioadenosine. Spermidine contacts are provided by histidine 60 and aspartate 84. S-methyl-5'-thioadenosine is bound by residues glutamate 104 and 136–137; that span reads DG. The Proton acceptor role is filled by aspartate 155. Proline 162 contributes to the S-methyl-5'-thioadenosine binding site.

It belongs to the spermidine/spermine synthase family. In terms of assembly, homodimer or homotetramer.

It localises to the cytoplasm. The catalysed reaction is S-adenosyl 3-(methylsulfanyl)propylamine + putrescine = S-methyl-5'-thioadenosine + spermidine + H(+). It participates in amine and polyamine biosynthesis; spermidine biosynthesis; spermidine from putrescine: step 1/1. Its function is as follows. Catalyzes the irreversible transfer of a propylamine group from the amino donor S-adenosylmethioninamine (decarboxy-AdoMet) to putrescine (1,4-diaminobutane) to yield spermidine. In Parasynechococcus marenigrum (strain WH8102), this protein is Polyamine aminopropyltransferase.